We begin with the raw amino-acid sequence, 238 residues long: Large ribosomal subunit protein uL1 (238 aa).

The protein belongs to the universal ribosomal protein uL1 family. In terms of assembly, part of the 50S ribosomal subunit.

Its function is as follows. Binds directly to 23S rRNA. The L1 stalk is quite mobile in the ribosome, and is involved in E site tRNA release. Functionally, protein L1 is also a translational repressor protein, it controls the translation of the L11 operon by binding to its mRNA. This is Large ribosomal subunit protein uL1 from Beutenbergia cavernae (strain ATCC BAA-8 / DSM 12333 / CCUG 43141 / JCM 11478 / NBRC 16432 / NCIMB 13614 / HKI 0122).